Here is a 249-residue protein sequence, read N- to C-terminus: Phosphatidylserine decarboxylase proenzyme (249 aa).

The active-site Schiff-base intermediate with substrate; via pyruvic acid is S208. The residue at position 208 (S208) is a Pyruvic acid (Ser); by autocatalysis.

The protein belongs to the phosphatidylserine decarboxylase family. PSD-A subfamily. Heterodimer of a large membrane-associated beta subunit and a small pyruvoyl-containing alpha subunit. Pyruvate serves as cofactor. In terms of processing, is synthesized initially as an inactive proenzyme. Formation of the active enzyme involves a self-maturation process in which the active site pyruvoyl group is generated from an internal serine residue via an autocatalytic post-translational modification. Two non-identical subunits are generated from the proenzyme in this reaction, and the pyruvate is formed at the N-terminus of the alpha chain, which is derived from the carboxyl end of the proenzyme. The post-translation cleavage follows an unusual pathway, termed non-hydrolytic serinolysis, in which the side chain hydroxyl group of the serine supplies its oxygen atom to form the C-terminus of the beta chain, while the remainder of the serine residue undergoes an oxidative deamination to produce ammonia and the pyruvoyl prosthetic group on the alpha chain.

The protein resides in the cell membrane. The enzyme catalyses a 1,2-diacyl-sn-glycero-3-phospho-L-serine + H(+) = a 1,2-diacyl-sn-glycero-3-phosphoethanolamine + CO2. Its pathway is phospholipid metabolism; phosphatidylethanolamine biosynthesis; phosphatidylethanolamine from CDP-diacylglycerol: step 2/2. Catalyzes the formation of phosphatidylethanolamine (PtdEtn) from phosphatidylserine (PtdSer). In Erythrobacter litoralis (strain HTCC2594), this protein is Phosphatidylserine decarboxylase proenzyme.